We begin with the raw amino-acid sequence, 546 residues long: Chaperonin GroEL (546 aa).

ATP contacts are provided by residues 29–32, K50, 86–90, G414, and D494; these read TLGP and DGTTT. Residues 525–546 are disordered; sequence KKESAAPAMPGHDGMGGMGGMM. Residues 537–546 show a composition bias toward gly residues; it reads DGMGGMGGMM.

Belongs to the chaperonin (HSP60) family. Forms a cylinder of 14 subunits composed of two heptameric rings stacked back-to-back. Interacts with the co-chaperonin GroES.

The protein resides in the cytoplasm. It carries out the reaction ATP + H2O + a folded polypeptide = ADP + phosphate + an unfolded polypeptide.. Together with its co-chaperonin GroES, plays an essential role in assisting protein folding. The GroEL-GroES system forms a nano-cage that allows encapsulation of the non-native substrate proteins and provides a physical environment optimized to promote and accelerate protein folding. The polypeptide is Chaperonin GroEL (Bdellovibrio bacteriovorus (strain ATCC 15356 / DSM 50701 / NCIMB 9529 / HD100)).